Consider the following 146-residue polypeptide: UPF0735 ACT domain-containing protein Cbei_1295 (146 aa).

The 76-residue stretch at 70 to 145 folds into the ACT domain; that stretch reads TYNIIFKNEK…NVEKVEFIGM (76 aa).

The protein belongs to the UPF0735 family.

The protein is UPF0735 ACT domain-containing protein Cbei_1295 of Clostridium beijerinckii (strain ATCC 51743 / NCIMB 8052) (Clostridium acetobutylicum).